The primary structure comprises 537 residues: Carbamoyl phosphate synthase large chain, C-terminal section (537 aa).

The segment at 1-395 (MSKKVVILGS…AYYKAQLSAG (395 aa)) is carbamoyl phosphate synthetic domain. An ATP-grasp domain is found at 122 to 313 (RELIIELGLK…LAKIATKVAI (192 aa)). ATP is bound by residues Arg-158, Lys-197, Leu-199, Glu-204, Gly-229, Val-230, His-231, Ser-232, Gln-272, and Glu-284. Gln-272, Glu-284, and Asn-286 together coordinate Mg(2+). 3 residues coordinate Mn(2+): Gln-272, Glu-284, and Asn-286. The region spanning 396 to 537 (YRLPEKGNLF…VHSLQEIYNI (142 aa)) is the MGS-like domain. An allosteric domain region spans residues 396–537 (YRLPEKGNLF…VHSLQEIYNI (142 aa)).

This sequence belongs to the CarB family. As to quaternary structure, composed of two chains; the small (or glutamine) chain promotes the hydrolysis of glutamine to ammonia, which is used by the large (or ammonia) chain to synthesize carbamoyl phosphate. Tetramer of heterodimers (alpha,beta)4. Mg(2+) is required as a cofactor. Requires Mn(2+) as cofactor.

The catalysed reaction is hydrogencarbonate + L-glutamine + 2 ATP + H2O = carbamoyl phosphate + L-glutamate + 2 ADP + phosphate + 2 H(+). The enzyme catalyses hydrogencarbonate + NH4(+) + 2 ATP = carbamoyl phosphate + 2 ADP + phosphate + 2 H(+). The protein operates within amino-acid biosynthesis; L-arginine biosynthesis; carbamoyl phosphate from bicarbonate: step 1/1. It participates in pyrimidine metabolism; UMP biosynthesis via de novo pathway; (S)-dihydroorotate from bicarbonate: step 1/3. Its function is as follows. Large subunit of the glutamine-dependent carbamoyl phosphate synthetase (CPSase). CPSase catalyzes the formation of carbamoyl phosphate from the ammonia moiety of glutamine, carbonate, and phosphate donated by ATP, constituting the first step of 2 biosynthetic pathways, one leading to arginine and/or urea and the other to pyrimidine nucleotides. The large subunit (synthetase) binds the substrates ammonia (free or transferred from glutamine from the small subunit), hydrogencarbonate and ATP and carries out an ATP-coupled ligase reaction, activating hydrogencarbonate by forming carboxy phosphate which reacts with ammonia to form carbamoyl phosphate. The sequence is that of Carbamoyl phosphate synthase large chain, C-terminal section (carB2) from Aquifex aeolicus (strain VF5).